The chain runs to 93 residues: uncharacterized protein (93 aa).

Residues 36 to 69 adopt a coiled-coil conformation; it reads SEERLLSRLFEEMDELREAVEKEDWENLRDELLD.

This is an uncharacterized protein from Archaeoglobus fulgidus (strain ATCC 49558 / DSM 4304 / JCM 9628 / NBRC 100126 / VC-16).